The following is an 88-amino-acid chain: Small ribosomal subunit protein bS20 (88 aa).

The disordered stretch occupies residues 1–26 (MANTAQARKRARQNTKRRQNSASQRS). Positions 7-19 (ARKRARQNTKRRQ) are enriched in basic residues.

Belongs to the bacterial ribosomal protein bS20 family.

Binds directly to 16S ribosomal RNA. This Psychrobacter cryohalolentis (strain ATCC BAA-1226 / DSM 17306 / VKM B-2378 / K5) protein is Small ribosomal subunit protein bS20.